An 841-amino-acid chain; its full sequence is Copper-transporting P-type ATPase (841 aa).

6 consecutive transmembrane segments (helical) span residues 186–206, 218–238, 256–276, 285–305, 445–465, and 474–494; these read LWVS…PMLG, ATFI…LPFF, IGLG…APGI, GAAV…VFVG, AVFV…WAAI, and GLLA…GLAT. The active-site 4-aspartylphosphate intermediate is the Asp-530. Helical transmembrane passes span 602–622 and 638–658; these read GIAD…DLGI and GKTV…AVAD. 2 residues coordinate Mg(2+): Asp-729 and Asp-733. Transmembrane regions (helical) follow at residues 742-762 and 800-820; these read VGIA…ITLV and VAAG…IAAA.

This sequence belongs to the cation transport ATPase (P-type) (TC 3.A.3) family. Type IB subfamily.

The protein localises to the cell membrane. It catalyses the reaction Cu(2+)(in) + ATP + H2O = Cu(2+)(out) + ADP + phosphate + H(+). In terms of biological role, involved in copper efflux. The chain is Copper-transporting P-type ATPase (actP) from Rhizobium leguminosarum bv. viciae.